Here is an 840-residue protein sequence, read N- to C-terminus: Putative pentatricopeptide repeat-containing protein At1g31840 (840 aa).

20 PPR repeats span residues 98 to 128, 145 to 179, 180 to 214, 216 to 250, 251 to 284, 285 to 319, 320 to 354, 355 to 389, 390 to 424, 425 to 459, 460 to 494, 495 to 529, 530 to 564, 565 to 599, 600 to 634, 635 to 669, 670 to 704, 705 to 739, 740 to 774, and 775 to 809; these read KDPS…MITN, DADV…GVVI, PQDS…GIEP, GVSA…GFRV, GIVS…GPAP, NVVT…GIEP, DLIA…GVKL, DVVV…GISP, NVVT…GMEP, SIVT…GYPP, DVVI…SIRL, NVVV…GIKP, DVAT…GLEP, DALA…KISA, DIAV…KMEP, DIVT…PFGP, NTVT…GSKP, NAVT…GISP, SIVS…KLLP, and DVVA…GVKP.

It belongs to the PPR family. P subfamily.

In Arabidopsis thaliana (Mouse-ear cress), this protein is Putative pentatricopeptide repeat-containing protein At1g31840.